A 37-amino-acid polypeptide reads, in one-letter code: Beta-2-microglobulin (37 aa).

One can recognise an Ig-like C1-type domain in the interval 11 to 37 (GKEDVLICHVSNFHPPDITITLLKNGE).

Belongs to the beta-2-microglobulin family. Heterodimer of an alpha chain and a beta chain. Beta-2-microglobulin is the beta-chain of major histocompatibility complex class I molecules.

It localises to the secreted. In terms of biological role, component of the class I major histocompatibility complex (MHC). Involved in the presentation of peptide antigens to the immune system. This is Beta-2-microglobulin (b2m) from Oreochromis niloticus (Nile tilapia).